The primary structure comprises 658 residues: Threonine--tRNA ligase (658 aa).

The TGS domain occupies 1-61 (MSDVRVTVQR…AAGDVVEPIT (61 aa)). Residues 259 to 554 (DHRRLGAELD…LLEHYAGALP (296 aa)) form a catalytic region. 3 residues coordinate Zn(2+): cysteine 353, histidine 404, and histidine 531.

It belongs to the class-II aminoacyl-tRNA synthetase family. In terms of assembly, homodimer. Zn(2+) serves as cofactor.

It is found in the cytoplasm. The enzyme catalyses tRNA(Thr) + L-threonine + ATP = L-threonyl-tRNA(Thr) + AMP + diphosphate + H(+). Catalyzes the attachment of threonine to tRNA(Thr) in a two-step reaction: L-threonine is first activated by ATP to form Thr-AMP and then transferred to the acceptor end of tRNA(Thr). Also edits incorrectly charged L-seryl-tRNA(Thr). This is Threonine--tRNA ligase from Parafrankia sp. (strain EAN1pec).